The primary structure comprises 348 residues: Dihydroorotase (348 aa).

Residues His17 and His19 each coordinate Zn(2+). Substrate is bound by residues 19–21 (HLR) and Asn45. Residues Lys103, His140, and His178 each contribute to the Zn(2+) site. Lys103 carries the post-translational modification N6-carboxylysine. His140 provides a ligand contact to substrate. Leu223 provides a ligand contact to substrate. Asp251 serves as a coordination point for Zn(2+). The active site involves Asp251. Substrate is bound by residues His255 and Ala267.

It belongs to the metallo-dependent hydrolases superfamily. DHOase family. Class II DHOase subfamily. As to quaternary structure, homodimer. Zn(2+) serves as cofactor.

It catalyses the reaction (S)-dihydroorotate + H2O = N-carbamoyl-L-aspartate + H(+). It participates in pyrimidine metabolism; UMP biosynthesis via de novo pathway; (S)-dihydroorotate from bicarbonate: step 3/3. Its function is as follows. Catalyzes the reversible cyclization of carbamoyl aspartate to dihydroorotate. In Shigella flexneri serotype 5b (strain 8401), this protein is Dihydroorotase.